A 191-amino-acid chain; its full sequence is Peptidyl-tRNA hydrolase (191 aa).

Residue tyrosine 14 participates in tRNA binding. The active-site Proton acceptor is histidine 19. Positions 64, 66, and 112 each coordinate tRNA.

The protein belongs to the PTH family. Monomer.

It localises to the cytoplasm. It carries out the reaction an N-acyl-L-alpha-aminoacyl-tRNA + H2O = an N-acyl-L-amino acid + a tRNA + H(+). Its function is as follows. Hydrolyzes ribosome-free peptidyl-tRNAs (with 1 or more amino acids incorporated), which drop off the ribosome during protein synthesis, or as a result of ribosome stalling. In terms of biological role, catalyzes the release of premature peptidyl moieties from peptidyl-tRNA molecules trapped in stalled 50S ribosomal subunits, and thus maintains levels of free tRNAs and 50S ribosomes. The protein is Peptidyl-tRNA hydrolase of Clostridium botulinum (strain Alaska E43 / Type E3).